The chain runs to 569 residues: Cysteine--tRNA ligase CPS1 homolog, chloroplastic/mitochondrial (569 aa).

The N-terminal 42 residues, 1–42 (MAAARRAAGLLPLLLSSPSRARLPHRQALALTPPLLRPHRLY), are a transit peptide targeting the chloroplast and mitochondrion. Cysteine 99 serves as a coordination point for Zn(2+). The 'HIGH' region signature appears at 101–111 (VTPYDDSHIGH). The Zn(2+) site is built by cysteine 279, histidine 304, and glutamate 308. The 'KMSKS' region signature appears at 336–340 (KMSKS). Residue lysine 339 coordinates ATP.

Belongs to the class-I aminoacyl-tRNA synthetase family. Zn(2+) serves as cofactor.

The protein localises to the plastid. It is found in the chloroplast. It localises to the mitochondrion. It carries out the reaction tRNA(Cys) + L-cysteine + ATP = L-cysteinyl-tRNA(Cys) + AMP + diphosphate. Nuclear genome-encoded factor required for normal assembly of chloroplast polysomes. The chain is Cysteine--tRNA ligase CPS1 homolog, chloroplastic/mitochondrial from Oryza sativa subsp. japonica (Rice).